The sequence spans 147 residues: SPI-1 type 3 secretion system pilotin (147 aa).

Positions 1-15 are cleaved as a signal peptide; the sequence is MKKFYSCLPVFLLIG. Residue Cys16 is the site of N-palmitoyl cysteine attachment. Cys16 carries S-diacylglycerol cysteine lipidation.

Belongs to the InvH family.

Its subcellular location is the cell outer membrane. Involved in the synthesis of the type III secretion system (T3SS), also called injectisome, which is used to inject bacterial effector proteins into eukaryotic host cells. Pilot protein that is required for the proper localization of the secretin InvG/SctC in the outer membrane. Necessary for efficient adherence and entry of these organisms into cultured epithelial cells. This Salmonella choleraesuis (strain SC-B67) protein is SPI-1 type 3 secretion system pilotin.